The sequence spans 131 residues: Global transcriptional regulator Spx (131 aa).

A disulfide bridge links Cys-10 with Cys-13.

Belongs to the ArsC family. Spx subfamily. As to quaternary structure, interacts with the C-terminal domain of the alpha subunit of the RNAP.

Its subcellular location is the cytoplasm. In terms of biological role, global transcriptional regulator that plays a key role in stress response and exerts either positive or negative regulation of genes. Acts by interacting with the C-terminal domain of the alpha subunit of the RNA polymerase (RNAP). This interaction can enhance binding of RNAP to the promoter region of target genes and stimulate their transcription, or block interaction of RNAP with activator. This is Global transcriptional regulator Spx from Listeria innocua serovar 6a (strain ATCC BAA-680 / CLIP 11262).